A 600-amino-acid chain; its full sequence is Elongation factor 4 (600 aa).

The tr-type G domain maps to 5–187; the sequence is KYIRNFSIVA…EIVEKIPAPE (183 aa). GTP contacts are provided by residues 17–22 and 134–137; these read DHGKST and NKVD.

The protein belongs to the TRAFAC class translation factor GTPase superfamily. Classic translation factor GTPase family. LepA subfamily.

The protein localises to the cell membrane. The catalysed reaction is GTP + H2O = GDP + phosphate + H(+). In terms of biological role, required for accurate and efficient protein synthesis under certain stress conditions. May act as a fidelity factor of the translation reaction, by catalyzing a one-codon backward translocation of tRNAs on improperly translocated ribosomes. Back-translocation proceeds from a post-translocation (POST) complex to a pre-translocation (PRE) complex, thus giving elongation factor G a second chance to translocate the tRNAs correctly. Binds to ribosomes in a GTP-dependent manner. The polypeptide is Elongation factor 4 (Clostridium perfringens (strain 13 / Type A)).